The chain runs to 318 residues: Formimidoylglutamase (318 aa).

Residues histidine 130, aspartate 155, histidine 157, aspartate 159, aspartate 246, and aspartate 248 each contribute to the Mn(2+) site.

It belongs to the arginase family. Mn(2+) is required as a cofactor.

It catalyses the reaction N-formimidoyl-L-glutamate + H2O = formamide + L-glutamate. It participates in amino-acid degradation; L-histidine degradation into L-glutamate; L-glutamate from N-formimidoyl-L-glutamate (hydrolase route): step 1/1. Functionally, catalyzes the conversion of N-formimidoyl-L-glutamate to L-glutamate and formamide. The sequence is that of Formimidoylglutamase from Photorhabdus laumondii subsp. laumondii (strain DSM 15139 / CIP 105565 / TT01) (Photorhabdus luminescens subsp. laumondii).